We begin with the raw amino-acid sequence, 1304 residues long: TPR-containing protein DDB_G0280363 (1304 aa).

Disordered regions lie at residues 19-85, 153-195, 296-334, 447-477, 576-687, and 706-728; these read QQHH…HPQQ, NINN…NSSL, LPSTNSSIVSRQQQLQQQQQKLKLKSSPSPISPFFYTQQ, GFNWSPSLQPDQSTSTNHTQAMLQQQQQRQQ, QNQQ…VTTI, and LTTVNHSKPPPNESKRGELVESP. Low complexity-rich tracts occupy residues 25–44, 52–85, and 153–194; these read QQNNTQVQQQQQQHTTQFNQ, HQQHQQQQHHQQQHHQQQQQQQQQQQQQQQHPQQ, and NINN…NNSS. Residues 296 to 306 are compositionally biased toward polar residues; sequence LPSTNSSIVSR. Residues 307–316 show a composition bias toward low complexity; sequence QQQLQQQQQK. Residues 448–465 show a composition bias toward polar residues; the sequence is FNWSPSLQPDQSTSTNHT. Low complexity-rich tracts occupy residues 466-477 and 576-597; these read QAMLQQQQQRQQ and QNQQQNQQQNQQQNQQHYPNQH. The span at 598–625 shows a compositional bias: basic residues; sequence HGQHQHNQHNQHHNQHHNQSHPNHKNQH. The span at 626–687 shows a compositional bias: low complexity; the sequence is QKQNQTQQST…NNNTNNVTTI (62 aa). TPR repeat units follow at residues 769–802, 899–932, 978–1011, 1046–1079, 1084–1111, 1112–1150, and 1152–1184; these read WRVYLELADLANRQNNLKLARKFYRKVTSTQPYI, MKHVPWYGPIYQEAYKLEERCEEYERAINIVEKG, WKIYFEAAQIEERSKNLTLSRAAYVKSVELCPEN, SKLRSLVLLEYSRLEEYAGNINKSRRILKMAHVE, WKVFLESVLLEMRANNYEAAIKEAKESL, KIHSGAGRLWAALIQLNQLKGVKSQLNVFKKALQFVPKS, and EVWCEGARIALNNNELREARRFLEFAIQFTPQF.

The sequence is that of TPR-containing protein DDB_G0280363 from Dictyostelium discoideum (Social amoeba).